Reading from the N-terminus, the 468-residue chain is Spliceosome-associated protein CWC27 homolog (468 aa).

N-acetylserine is present on S2. In terms of domain architecture, PPIase cyclophilin-type spans 11 to 166 (TNGKVLLKTT…NPHRIKSCEV (156 aa)). 2 disordered regions span residues 204–382 (LLSF…EDQT) and 427–468 (RKVK…KERR). Residues 206–229 (SFGEEAEEEEEEVNRVSQSMKGRS) are a coiled coil. Basic and acidic residues predominate over residues 231–241 (SSHDLLKDDPH). Positions 256-268 (TGDLEDDAEDDSV) are enriched in acidic residues. 2 stretches are compositionally biased toward basic and acidic residues: residues 269–287 (EHDG…ERIA) and 302–342 (GDGE…AEKG). The residue at position 273 (S273) is a Phosphoserine. Residues 309 to 342 (ASRSEELRKEARQLKRELLAAKQKKESATKAEKG) are a coiled coil. S343 is subject to Phosphoserine. Composition is skewed to basic and acidic residues over residues 356–368 (EYRR…EALR) and 453–468 (RREE…KERR).

This sequence belongs to the cyclophilin-type PPIase family. Part of the activated spliceosome B/catalytic step 1 spliceosome, one of the forms of the spliceosome which has a well-formed active site but still cannot catalyze the branching reaction and is composed at least of 52 proteins, the U2, U5 and U6 snRNAs and the pre-mRNA. Recruited during early steps of activated spliceosome B maturation, it is probably one of the first proteins released from this complex as he matures to the spliceosome C complex. Component of the minor spliceosome, which splices U12-type introns.

It localises to the nucleus. In terms of biological role, as part of the spliceosome, plays a role in pre-mRNA splicing. Probable inactive PPIase with no peptidyl-prolyl cis-trans isomerase activity. As a component of the minor spliceosome, involved in the splicing of U12-type introns in pre-mRNAs. The sequence is that of Spliceosome-associated protein CWC27 homolog from Rattus norvegicus (Rat).